The sequence spans 119 residues: DNA-directed RNA polymerase subunit omega (119 aa).

Belongs to the RNA polymerase subunit omega family. The RNAP catalytic core consists of 2 alpha, 1 beta, 1 beta' and 1 omega subunit. When a sigma factor is associated with the core the holoenzyme is formed, which can initiate transcription.

The catalysed reaction is RNA(n) + a ribonucleoside 5'-triphosphate = RNA(n+1) + diphosphate. Functionally, promotes RNA polymerase assembly. Latches the N- and C-terminal regions of the beta' subunit thereby facilitating its interaction with the beta and alpha subunits. The polypeptide is DNA-directed RNA polymerase subunit omega (rpoZ) (Caulobacter vibrioides (strain ATCC 19089 / CIP 103742 / CB 15) (Caulobacter crescentus)).